Consider the following 152-residue polypeptide: Acidic phospholipase A2 homolog taipoxin gamma chain (152 aa).

An N-terminal signal peptide occupies residues methionine 1 to serine 19. 8 cysteine pairs are disulfide-bonded: cysteine 38–cysteine 104, cysteine 42–cysteine 46, cysteine 54–cysteine 151, cysteine 56–cysteine 72, cysteine 71–cysteine 132, cysteine 78–cysteine 125, cysteine 88–cysteine 118, and cysteine 111–cysteine 123. N-linked (GlcNAc...) asparagine glycosylation occurs at asparagine 97.

This sequence belongs to the phospholipase A2 family. Group I subfamily. D49 sub-subfamily. Heterotrimer of alpha, beta, and gamma chains; non-covalently linked. In terms of processing, contains 0.9% fucose, 2.2% mannose, 4.2% N-acetyl-D-glucosamine, 3.5% galactose, and 3.8% N-acetyl-neuraminic acid (sialic acid). In terms of tissue distribution, expressed by the venom gland.

It localises to the secreted. Its function is as follows. Heterotrimer: Snake venom phospholipase A2 (PLA2) heterotrimer that acts as a potent presynaptic neurotoxin by blocking synaptic transmission and synaptic vesicle recycling. May act by binding in a calcium-dependent fashion to neurotonal pentraxin-1 (NPTX1) and neurotonal pentraxin-2 (NPTX2), but not to neuronal pentraxin receptor (NPTXR). Also binds to taipoxin-associated calcium binding protein 49 (RCN2), a protein localized in the lumen of endoplasmic reticulum. Functionally, monomer (gamma chain): Snake venom phospholipase A2 homolog that is neither toxic nor enzymatically active. Does not bind calcium. The polypeptide is Acidic phospholipase A2 homolog taipoxin gamma chain (Oxyuranus scutellatus scutellatus (Australian taipan)).